A 120-amino-acid polypeptide reads, in one-letter code: NAD(P)H-quinone oxidoreductase subunit 3, chloroplastic (120 aa).

The next 3 membrane-spanning stretches (helical) occupy residues 9–29, 64–84, and 88–108; these read IFWAFLIISSAIPVLAFLISG, MFALVFVVFDVETVFLYPWAM, and VLGVSAFLEAFIFVLILILGL.

This sequence belongs to the complex I subunit 3 family. In terms of assembly, NDH is composed of at least 16 different subunits, 5 of which are encoded in the nucleus.

The protein resides in the plastid. The protein localises to the chloroplast thylakoid membrane. It carries out the reaction a plastoquinone + NADH + (n+1) H(+)(in) = a plastoquinol + NAD(+) + n H(+)(out). The catalysed reaction is a plastoquinone + NADPH + (n+1) H(+)(in) = a plastoquinol + NADP(+) + n H(+)(out). In terms of biological role, NDH shuttles electrons from NAD(P)H:plastoquinone, via FMN and iron-sulfur (Fe-S) centers, to quinones in the photosynthetic chain and possibly in a chloroplast respiratory chain. The immediate electron acceptor for the enzyme in this species is believed to be plastoquinone. Couples the redox reaction to proton translocation, and thus conserves the redox energy in a proton gradient. The chain is NAD(P)H-quinone oxidoreductase subunit 3, chloroplastic from Draba nemorosa (Woodland whitlowgrass).